We begin with the raw amino-acid sequence, 230 residues long: N-(5'-phosphoribosyl)anthranilate isomerase (230 aa).

This sequence belongs to the TrpF family.

The enzyme catalyses N-(5-phospho-beta-D-ribosyl)anthranilate = 1-(2-carboxyphenylamino)-1-deoxy-D-ribulose 5-phosphate. It participates in amino-acid biosynthesis; L-tryptophan biosynthesis; L-tryptophan from chorismate: step 3/5. The sequence is that of N-(5'-phosphoribosyl)anthranilate isomerase from Trichodesmium erythraeum (strain IMS101).